The chain runs to 289 residues: Glucose and ribitol dehydrogenase homolog 2 (289 aa).

The segment at 1-32 (MASGFPPQKQETQPGIQHVMEPTPEFSSSNYK) is disordered. An NAD(+)-binding site is contributed by 43-67 (LVTGGDSGIGKAVCHCYALEGASVA). Ser180 contacts substrate. Tyr193 acts as the Proton acceptor in catalysis.

This sequence belongs to the short-chain dehydrogenases/reductases (SDR) family.

In terms of biological role, may act as a short alcohol-polyol-sugar dehydrogenase possibly related to carbohydrate metabolism and the acquisition of desiccation tolerance. May also be involved in signal transduction. This Arabidopsis thaliana (Mouse-ear cress) protein is Glucose and ribitol dehydrogenase homolog 2.